The primary structure comprises 458 residues: Vasoactive intestinal polypeptide receptor 1 (458 aa).

The first 31 residues, 1-31 (MRPLSPPPAGWFCVLAGVLACVLGPVGSWAV), serve as a signal peptide directing secretion. The Extracellular portion of the chain corresponds to 32–142 (GLQQEECDYL…DEQQTVFYNS (111 aa)). 5 cysteine pairs are disulfide-bonded: cysteine 38–cysteine 209, cysteine 51–cysteine 73, cysteine 64–cysteine 106, cysteine 87–cysteine 123, and cysteine 216–cysteine 286. 4 N-linked (GlcNAc...) asparagine glycosylation sites follow: asparagine 59, asparagine 70, asparagine 101, and asparagine 105. A helical transmembrane segment spans residues 143-167 (VKTGYTIGYSLSLAALLVATAILSL). Residues 168-175 (FRKLHCTR) are Cytoplasmic-facing. The helical transmembrane segment at 176–197 (NYIHMHLFISFILRATAVFIKD) threads the bilayer. Topologically, residues 198–217 (LALFDSEESDHCSKGSVGCK) are extracellular. Residues 218–242 (AAVVLFQYCVMANFFWLLVEGLYLH) traverse the membrane as a helical segment. Over 243–255 (TLLAVSFFSERKY) the chain is Cytoplasmic. The chain crosses the membrane as a helical span at residues 256–277 (FWGYIFVGWGVPSTFIMVWTVV). Residues 278-292 (RIHFEDYGCWDTIHS) lie on the Extracellular side of the membrane. Residues 293–317 (SLWWIIKAPILASILVNFILFIRII) traverse the membrane as a helical segment. The Cytoplasmic segment spans residues 318 to 339 (GILVQKLRPPDVGKSDNSPYSR). The helical transmembrane segment at 340 to 360 (LAKSTLLLIPLFGVHYIMFAF) threads the bilayer. Over 361 to 368 (FPDNFKAE) the chain is Extracellular. The chain crosses the membrane as a helical span at residues 369–392 (VKMVFELIVGSFQGCVVAILYCFL). Topologically, residues 393-458 (NGEVQAELRR…SSFQAEVSLV (66 aa)) are cytoplasmic.

The protein belongs to the G-protein coupled receptor 2 family. As to quaternary structure, interacts with ADCYAP1/PACAP; activated by both PACAP27 and PACAP38 neuropeptides. Interacts with VIP; the interaction results in VIPR1 activation.

The protein resides in the cell membrane. Functionally, g protein-coupled receptor activated by the neuropeptides vasoactive intestinal peptide (VIP) and pituitary adenylate cyclase-activating polypeptide (ADCYAP1/PACAP). Binds VIP and both PACAP27 and PACAP38 bioactive peptides with the following order of ligand affinity VIP = PACAP27 &gt; PACAP38. Ligand binding causes a conformation change that triggers signaling via guanine nucleotide-binding proteins (G proteins) and modulates the activity of downstream effectors. Activates cAMP-dependent pathway. The protein is Vasoactive intestinal polypeptide receptor 1 (VIPR1) of Sus scrofa (Pig).